We begin with the raw amino-acid sequence, 227 residues long: Cytochrome c oxidase subunit 2 (227 aa).

Residues 1 to 14 are Mitochondrial intermembrane-facing; the sequence is MAYPFQLGLQDATS. The helical transmembrane segment at 15–45 threads the bilayer; that stretch reads PIMEELLHFHDHTLMIVFLISSLVLYIISLM. At 46–59 the chain is on the mitochondrial matrix side; it reads LTTKLTHTSTMDAQ. The chain crosses the membrane as a helical span at residues 60-87; that stretch reads EVETVWTILPAIILILIALPSLRILYMM. The Mitochondrial intermembrane portion of the chain corresponds to 88–227; sequence DEINNPSLTV…YFEAWSALMV (140 aa). The Cu cation site is built by His-161, Cys-196, Glu-198, Cys-200, His-204, and Met-207. Glu-198 is a binding site for Mg(2+). Residue Tyr-218 is modified to Phosphotyrosine.

Belongs to the cytochrome c oxidase subunit 2 family. Component of the cytochrome c oxidase (complex IV, CIV), a multisubunit enzyme composed of 14 subunits. The complex is composed of a catalytic core of 3 subunits MT-CO1, MT-CO2 and MT-CO3, encoded in the mitochondrial DNA, and 11 supernumerary subunits COX4I, COX5A, COX5B, COX6A, COX6B, COX6C, COX7A, COX7B, COX7C, COX8 and NDUFA4, which are encoded in the nuclear genome. The complex exists as a monomer or a dimer and forms supercomplexes (SCs) in the inner mitochondrial membrane with NADH-ubiquinone oxidoreductase (complex I, CI) and ubiquinol-cytochrome c oxidoreductase (cytochrome b-c1 complex, complex III, CIII), resulting in different assemblies (supercomplex SCI(1)III(2)IV(1) and megacomplex MCI(2)III(2)IV(2)). Found in a complex with TMEM177, COA6, COX18, COX20, SCO1 and SCO2. Interacts with TMEM177 in a COX20-dependent manner. Interacts with COX20. Interacts with COX16. Cu cation serves as cofactor.

It is found in the mitochondrion inner membrane. The catalysed reaction is 4 Fe(II)-[cytochrome c] + O2 + 8 H(+)(in) = 4 Fe(III)-[cytochrome c] + 2 H2O + 4 H(+)(out). In terms of biological role, component of the cytochrome c oxidase, the last enzyme in the mitochondrial electron transport chain which drives oxidative phosphorylation. The respiratory chain contains 3 multisubunit complexes succinate dehydrogenase (complex II, CII), ubiquinol-cytochrome c oxidoreductase (cytochrome b-c1 complex, complex III, CIII) and cytochrome c oxidase (complex IV, CIV), that cooperate to transfer electrons derived from NADH and succinate to molecular oxygen, creating an electrochemical gradient over the inner membrane that drives transmembrane transport and the ATP synthase. Cytochrome c oxidase is the component of the respiratory chain that catalyzes the reduction of oxygen to water. Electrons originating from reduced cytochrome c in the intermembrane space (IMS) are transferred via the dinuclear copper A center (CU(A)) of subunit 2 and heme A of subunit 1 to the active site in subunit 1, a binuclear center (BNC) formed by heme A3 and copper B (CU(B)). The BNC reduces molecular oxygen to 2 water molecules using 4 electrons from cytochrome c in the IMS and 4 protons from the mitochondrial matrix. This chain is Cytochrome c oxidase subunit 2 (MT-CO2), found in Cuon alpinus (Dhole).